Consider the following 80-residue polypeptide: uncharacterized protein (80 aa).

The protein to M.leprae U650M.

This is an uncharacterized protein from Mycobacterium bovis (strain ATCC BAA-935 / AF2122/97).